The primary structure comprises 413 residues: Large ribosomal subunit protein uL4 (413 aa).

Ala-2 carries the post-translational modification N-acetylalanine. Lys-14 carries the post-translational modification N6-acetyllysine. Residue Arg-97 is modified to Omega-N-methylarginine. Lys-106 carries the post-translational modification N6-acetyllysine. A Glycyl lysine isopeptide (Lys-Gly) (interchain with G-Cter in SUMO2) cross-link involves residue Lys-239. Lys-259 bears the N6-acetyllysine mark. The residue at position 266 (Thr-266) is a Phosphothreonine. Phosphoserine is present on residues Ser-290 and Ser-295. Citrulline is present on Arg-300. A Glycyl lysine isopeptide (Lys-Gly) (interchain with G-Cter in SUMO2) cross-link involves residue Lys-327. Position 333 is an N6-acetyllysine (Lys-333). Positions 355–413 are disordered; that stretch reads AAALAAKSDPKEAPAKKKPVVGKKKKPVVGRKAAAAKKPAADKKAADKRAGPEDKKPAA. At Lys-361 the chain carries N6-acetyllysine; alternate. A Glycyl lysine isopeptide (Lys-Gly) (interchain with G-Cter in SUMO1); alternate cross-link involves residue Lys-361. Ser-362 carries the post-translational modification Phosphoserine. Residues 370–383 are compositionally biased toward basic residues; the sequence is KKKPVVGKKKKPVV. Over residues 393-413 the composition is skewed to basic and acidic residues; it reads PAADKKAADKRAGPEDKKPAA.

This sequence belongs to the universal ribosomal protein uL4 family. Component of the large ribosomal subunit. May bind IPO9 with low affinity. Interacts with RBM3. In terms of processing, citrullinated by PADI4.

The protein resides in the cytoplasm. Functionally, component of the large ribosomal subunit. The ribosome is a large ribonucleoprotein complex responsible for the synthesis of proteins in the cell. The sequence is that of Large ribosomal subunit protein uL4 (RPL4) from Oryctolagus cuniculus (Rabbit).